Here is a 101-residue protein sequence, read N- to C-terminus: NADH-quinone oxidoreductase subunit K (101 aa).

Transmembrane regions (helical) follow at residues 4-24 (LSDY…GIFV), 29-49 (IITL…NFVA), and 61-81 (IFVF…LAIL).

It belongs to the complex I subunit 4L family. In terms of assembly, NDH-1 is composed of 14 different subunits. Subunits NuoA, H, J, K, L, M, N constitute the membrane sector of the complex.

Its subcellular location is the cell inner membrane. The enzyme catalyses a quinone + NADH + 5 H(+)(in) = a quinol + NAD(+) + 4 H(+)(out). NDH-1 shuttles electrons from NADH, via FMN and iron-sulfur (Fe-S) centers, to quinones in the respiratory chain. The immediate electron acceptor for the enzyme in this species is believed to be ubiquinone. Couples the redox reaction to proton translocation (for every two electrons transferred, four hydrogen ions are translocated across the cytoplasmic membrane), and thus conserves the redox energy in a proton gradient. This chain is NADH-quinone oxidoreductase subunit K, found in Ruthia magnifica subsp. Calyptogena magnifica.